The chain runs to 659 residues: MVMLQSPAQKASDSASAQNTAVGGLMSPNSNPDSPKSNTSPDVASADSVVSGTGGGSTPPAAKIPKFIISANGAAVAGKQEQELRYSLERLKQMSSESGSLLSRLSPLQEDSQDKEKPNHNNNNSLTNHNANSNTRRSQSPPASVGSVSFSSPAQQRKLLELNAVRHLARPEPLQHPHAALLQQHPHLLQNPQFLAAAQQHMHHHQHQHHQHPAHPHSHQHPHPHPHPHPHPHPSAVFHLRAPSSSSTAPPSPATSPLSPPTSPAMHSDQQMSPPIAPPQNPPHSSQPPQQQQVAAPSDMDLERIKLVAAVAARTTQASSTSALASASNSVSNASISISNSSSGSPSGRDLSDYGFRIQLGGLAAAAAAAAATSRQIAAATYARSDTSEELNVDGNDEDSNDGSHSTPSVCPVDLTRSVNSSAAANPSSASTSASSDRDAATKRLAFSVENILDPNKFTGNKLPSGPFGHPRQWSYERDEEMQERLDDDQSEDMSAQDLNDMDQDDMCDDGSDIDDPSSETDSKKGGSRNGDGKSGGGGGGGSKPRRARTAFTYEQLVSLENKFKTTRYLSVCERLNLALSLSLTETQVKIWFQNRRTKWKKQNPGMDVNSPTIPPPGGGSFGPGAYASGLLYSHAVPYPPYGPYFHPLGAHHLSHSHS.

Residues 1 to 21 (MVMLQSPAQKASDSASAQNTA) are compositionally biased toward polar residues. Disordered stretches follow at residues 1-63 (MVML…PAAK), 94-152 (MSSE…SFSS), 198-298 (AQQH…AAPS), 316-349 (TQASSTSALASASNSVSNASISISNSSSGSPSGR), 376-440 (QIAA…DRDA), and 455-548 (PNKF…PRRA). Low complexity-rich tracts occupy residues 27–51 (SPNSNPDSPKSNTSPDVASADSVVS), 95–108 (SSESGSLLSRLSPL), and 120–135 (HNNNNSLTNHNANSNT). Positions 136 to 152 (RRSQSPPASVGSVSFSS) are enriched in polar residues. Positions 201 to 232 (HMHHHQHQHHQHPAHPHSHQHPHPHPHPHPHP) are enriched in basic residues. 7 tandem repeats follow at residues 221 to 222 (HP), 223 to 224 (HP), 225 to 226 (HP), 227 to 228 (HP), 229 to 230 (HP), 231 to 232 (HP), and 233 to 234 (HP). A 7 X 2 AA tandem repeats of H-P region spans residues 221 to 234 (HPHPHPHPHPHPHP). 2 stretches are compositionally biased toward pro residues: residues 250–263 (PPSPATSPLSPPTS) and 275–286 (PIAPPQNPPHSS). Low complexity-rich tracts occupy residues 287–298 (QPPQQQQVAAPS) and 316–347 (TQASSTSALASASNSVSNASISISNSSSGSPS). The span at 388-401 (SEELNVDGNDEDSN) shows a compositional bias: acidic residues. The span at 417-435 (RSVNSSAAANPSSASTSAS) shows a compositional bias: low complexity. Composition is skewed to acidic residues over residues 478–492 (RDEEMQERLDDDQSE) and 500–519 (NDMDQDDMCDDGSDIDDPSS). Gly residues predominate over residues 528–543 (SRNGDGKSGGGGGGGS). The homeobox DNA-binding region spans 545 to 604 (PRRARTAFTYEQLVSLENKFKTTRYLSVCERLNLALSLSLTETQVKIWFQNRRTKWKKQN).

The protein belongs to the NK-1 homeobox family. Mesodermal precursor cells of distinct muscles during embryogenesis, a subset of neuronal cells of the CNS and their precursors and also in cells of a small region of the midgut.

It is found in the nucleus. Functionally, may play a role in specifying the identity of particular somatic muscles and neurons of the CNS. The protein is Homeobox protein slou (slou) of Drosophila melanogaster (Fruit fly).